A 119-amino-acid polypeptide reads, in one-letter code: Large ribosomal subunit protein bL20 (119 aa).

The protein belongs to the bacterial ribosomal protein bL20 family.

Binds directly to 23S ribosomal RNA and is necessary for the in vitro assembly process of the 50S ribosomal subunit. It is not involved in the protein synthesizing functions of that subunit. The sequence is that of Large ribosomal subunit protein bL20 from Herminiimonas arsenicoxydans.